Here is a 578-residue protein sequence, read N- to C-terminus: PTS system fructose-specific EIIB'BC component (578 aa).

PTS EIIB type-2 domains are found at residues 1 to 99 (MSKI…EALA) and 119 to 214 (VVAI…AALA). Cysteine 125 functions as the Phosphocysteine intermediate; for EIIB activity in the catalytic mechanism. Position 125 is a phosphocysteine; by EIIA (cysteine 125). The 336-residue stretch at 241-576 (PYMHLLTGVS…KKPIPAEERA (336 aa)) folds into the PTS EIIC type-2 domain. A run of 9 helical transmembrane segments spans residues 251–271 (YMLPLVVAGGLLIALSFVFGI), 284–304 (LMAIGGGAAFKLMVPVLAGFI), 319–339 (IGGMLAVNLNAGFLGGIVAGF), 364–384 (VLILPLLSTAITGLIMVYVVG), 405–425 (NAVVLGLILGGMMAVDMGGPI), 428–450 (AAYTFAVGLLTSSTYAPMAAVMA), 477–497 (AGGAAAVLGLSFITEGAIPFA), 518–538 (LSMALGCLLVAPHGGIFVLAI), and 545–565 (LGLYALSIVVGTLVTTGLLIA).

The protein localises to the cell inner membrane. It carries out the reaction D-fructose(out) + N(pros)-phospho-L-histidyl-[protein] = D-fructose 1-phosphate(in) + L-histidyl-[protein]. Its function is as follows. The phosphoenolpyruvate-dependent sugar phosphotransferase system (sugar PTS), a major carbohydrate active transport system, catalyzes the phosphorylation of incoming sugar substrates concomitantly with their translocation across the cell membrane. The enzyme II FruAB PTS system is involved in fructose transport. This Rhodobacter capsulatus (Rhodopseudomonas capsulata) protein is PTS system fructose-specific EIIB'BC component.